Consider the following 578-residue polypeptide: Acyl-CoA synthetase ACTT5 (578 aa).

Position 211–222 (211–222 (RLTTSGTTGLPK)) interacts with AMP. The tract at residues 472 to 551 (ELEAALLQAK…DEIPRSPTGK (80 aa)) is AMP-binding.

This sequence belongs to the ATP-dependent AMP-binding enzyme family.

It participates in mycotoxin biosynthesis. Acyl-CoA synthetase; part of the gene clusters that mediate the biosynthesis of the host-selective toxins (HSTs) ACT-toxins responsible for brown spot of tangerine disease by the tangerine pathotype which affects tangerines and mandarins. ACT-toxins consist of three moieties, 9,10-epoxy-8-hydroxy-9-methyl-decatrienoic acid (EDA), valine and a polyketide. ACT-toxin I is toxic to both citrus and pear; toxin II the 5''-deoxy derivative of ACT-toxin I, is highly toxic to pear and slightly toxic to citrus. On cellular level, ACT-toxins affect plasma membrane of susceptible cells and cause a sudden increase in loss of K(+) after a few minutes of toxin treatment. The acyl-CoA ligase ACTT1, the hydrolase ACTT2, the enoyl-CoA hydratases ACTT3 and ACTT6, and the acyl-CoA synthetase ACTT5 are all involved in the biosynthesis of the AK-, AF- and ACT-toxin common 9,10-epoxy-8-hydroxy-9-methyl-decatrienoic acid (EDA) structural moiety. The exact role of each enzyme, and of additional enzymes identified within the AF-toxin clusters have still to be determined. On the other hand, ACTTS1 to ACTTS4 are specific to the tangerine pathotype. The function of ACTTS3 is to elongate the polyketide chain portion of ACT-toxin that is unique to this toxin. The enoyl-reductase ACTTS2 might complement the missing enoyl-reductase (ER) domain in ACTTS3 in the synthesis of the polyketide portion of ACT-toxin. The roles of the nonribosomal peptide synthetases-related proteins ACTTS1 and ACTTS4 have also still not been elucidated. This chain is Acyl-CoA synthetase ACTT5, found in Alternaria alternata (Alternaria rot fungus).